We begin with the raw amino-acid sequence, 265 residues long: Glutamate racemase (265 aa).

Substrate-binding positions include 12-13 and 44-45; these read DS and YG. The active-site Proton donor/acceptor is Cys-75. Residue 76–77 coordinates substrate; it reads NT. Residue Cys-186 is the Proton donor/acceptor of the active site. 187 to 188 contributes to the substrate binding site; it reads TH.

The protein belongs to the aspartate/glutamate racemases family.

The enzyme catalyses L-glutamate = D-glutamate. It functions in the pathway cell wall biogenesis; peptidoglycan biosynthesis. Its function is as follows. Provides the (R)-glutamate required for cell wall biosynthesis. In Pseudomonas putida (strain ATCC 47054 / DSM 6125 / CFBP 8728 / NCIMB 11950 / KT2440), this protein is Glutamate racemase.